A 1043-amino-acid polypeptide reads, in one-letter code: V(D)J recombination-activating protein 1 (1043 aa).

Positions 1-288 (MAASFPPTLG…LAVDFPEHFV (288 aa)) are interaction with importin alpha-1. Positions 40 to 54 (KTPEEAQKEKKDSFE) are enriched in basic and acidic residues. A disordered region spans residues 40-80 (KTPEEAQKEKKDSFEGKPSLEQSPAVLDKADGQKPVPTQPL). K234 participates in a covalent cross-link: Glycyl lysine isopeptide (Lys-Gly) (interchain with G-Cter in ubiquitin). Zn(2+)-binding residues include C269, H273, C293, C296, H298, C308, H310, C313, C316, C328, C331, C358, C363, H375, and H379. The RING-type zinc finger occupies 293-332 (CQICEHILADPVETNCKHVFCRVCILRCLKVMGSYCPSCR). The RAG1-type zinc-finger motif lies at 354-383 (LMVKCPAKECNEEVSLEKYNHHISSHKESK). The segment at residues 392–459 (GGRPRQHLLS…QADELEAIMQ (68 aa)) is a DNA-binding region (NBD). 3 residues coordinate a divalent metal cation: D603, D711, and E965.

It belongs to the RAG1 family. As to quaternary structure, homodimer. Component of the RAG complex composed of core components RAG1 and RAG2, and associated component HMGB1 or HMGB2. Interacts with DCAF1, leading to recruitment of the CUL4A-RBX1-DDB1-DCAF1/VPRBP complex to ubiquitinate proteins and limit error-prone repair during V(D)J recombination. Mg(2+) is required as a cofactor. It depends on Mn(2+) as a cofactor. In terms of processing, autoubiquitinated in the presence of CDC34/UBCH3. In terms of tissue distribution, maturing lymphoid cells.

Its subcellular location is the nucleus. It carries out the reaction S-ubiquitinyl-[E2 ubiquitin-conjugating enzyme]-L-cysteine + [acceptor protein]-L-lysine = [E2 ubiquitin-conjugating enzyme]-L-cysteine + N(6)-ubiquitinyl-[acceptor protein]-L-lysine.. In terms of biological role, catalytic component of the RAG complex, a multiprotein complex that mediates the DNA cleavage phase during V(D)J recombination. V(D)J recombination assembles a diverse repertoire of immunoglobulin and T-cell receptor genes in developing B and T-lymphocytes through rearrangement of different V (variable), in some cases D (diversity), and J (joining) gene segments. In the RAG complex, RAG1 mediates the DNA-binding to the conserved recombination signal sequences (RSS) and catalyzes the DNA cleavage activities by introducing a double-strand break between the RSS and the adjacent coding segment. RAG2 is not a catalytic component but is required for all known catalytic activities. DNA cleavage occurs in 2 steps: a first nick is introduced in the top strand immediately upstream of the heptamer, generating a 3'-hydroxyl group that can attack the phosphodiester bond on the opposite strand in a direct transesterification reaction, thereby creating 4 DNA ends: 2 hairpin coding ends and 2 blunt, 5'-phosphorylated ends. The chromatin structure plays an essential role in the V(D)J recombination reactions and the presence of histone H3 trimethylated at 'Lys-4' (H3K4me3) stimulates both the nicking and haipinning steps. The RAG complex also plays a role in pre-B cell allelic exclusion, a process leading to expression of a single immunoglobulin heavy chain allele to enforce clonality and monospecific recognition by the B-cell antigen receptor (BCR) expressed on individual B-lymphocytes. The introduction of DNA breaks by the RAG complex on one immunoglobulin allele induces ATM-dependent repositioning of the other allele to pericentromeric heterochromatin, preventing accessibility to the RAG complex and recombination of the second allele. In addition to its endonuclease activity, RAG1 also acts as an E3 ubiquitin-protein ligase that mediates monoubiquitination of histone H3. Histone H3 monoubiquitination is required for the joining step of V(D)J recombination. Mediates polyubiquitination of KPNA1. In Homo sapiens (Human), this protein is V(D)J recombination-activating protein 1 (RAG1).